Reading from the N-terminus, the 507-residue chain is Interleukin-17 receptor E-like protein (507 aa).

The first 21 residues, 1–21, serve as a signal peptide directing secretion; that stretch reads MLAGQALAFLGLTWGTFQSLA.

Its subcellular location is the secreted. This is Interleukin-17 receptor E-like protein from Homo sapiens (Human).